The sequence spans 425 residues: MSVSDSLFERAKQLMPGGVNSPVRAFRSVGGAPFFVKAARGATLVTADDQELIDFVCTWGPAIHGHNHPRIKAAIAEALEHGTSFGTPNPYEVEMAELIVRFFPSIQKVRMCNSGTEATMSAIRLARGFTKRSKIIKFAGCYHGHSDSLLIKAGSGALTHGHPDSAGVPISFAQETVVVTYNDRAALEAAFAANVGQIACVIIEPYCGNVGFIMPDAGYLQAVRELCTREGAVLIFDEVMTGFRQARGGVQELENITPDLTCLGKIIGGGLPVGAFGGRTYLMDLLAPLGPVYQAGTLSGNPLAMAAGIAALKLLDEENPYARLDQLGRQLRDAVLAAAKTKGLPVQVPQRGSMFSIFFTPQPVRDYASALAGDAKLFGRFFHTCLANGVYLAPSAYEAAFLSTAHEGAAIDRACEVLASAINEL.

At lysine 265 the chain carries N6-(pyridoxal phosphate)lysine.

Belongs to the class-III pyridoxal-phosphate-dependent aminotransferase family. HemL subfamily. In terms of assembly, homodimer. Requires pyridoxal 5'-phosphate as cofactor.

Its subcellular location is the cytoplasm. The enzyme catalyses (S)-4-amino-5-oxopentanoate = 5-aminolevulinate. Its pathway is porphyrin-containing compound metabolism; protoporphyrin-IX biosynthesis; 5-aminolevulinate from L-glutamyl-tRNA(Glu): step 2/2. This chain is Glutamate-1-semialdehyde 2,1-aminomutase, found in Opitutus terrae (strain DSM 11246 / JCM 15787 / PB90-1).